The chain runs to 143 residues: Putative pre-16S rRNA nuclease (143 aa).

It belongs to the YqgF nuclease family.

The protein localises to the cytoplasm. Its function is as follows. Could be a nuclease involved in processing of the 5'-end of pre-16S rRNA. This chain is Putative pre-16S rRNA nuclease, found in Lactococcus lactis subsp. cremoris (strain MG1363).